An 87-amino-acid polypeptide reads, in one-letter code: Small ribosomal subunit protein uS17 (87 aa).

Belongs to the universal ribosomal protein uS17 family. As to quaternary structure, part of the 30S ribosomal subunit.

In terms of biological role, one of the primary rRNA binding proteins, it binds specifically to the 5'-end of 16S ribosomal RNA. This Staphylococcus aureus (strain JH1) protein is Small ribosomal subunit protein uS17.